A 378-amino-acid chain; its full sequence is 3,6-diketocamphane 1,6-monooxygenase (378 aa).

FMN contacts are provided by residues histidine 10, serine 44, methionine 76, and 201–209 (TGFSYNSPS).

This sequence belongs to the bacterial luciferase oxidoreductase family. As to quaternary structure, homodimer. Likely forms a loose transient complex with a P.putida flavin reductase that provides the required FMNH(2) to the enzyme.

The enzyme catalyses (1S,4S)-bornane-2,5-dione + FMNH2 + O2 = (1S,4S)-5-oxo-1,2-campholide + FMN + H2O + H(+). Involved in the degradation and assimilation of (-)-camphor, which allows P.putida strain NCIMB 10007 to grow on this enantiomer of camphor as the sole carbon source. Catalyzes the FMNH(2)-dependent lactonization of 3,6-diketocamphane via a Baeyer-Villiger oxidation to produce the unstable lactone 5-oxo-1,2-campholide with (S,S) configuration, that presumably undergoes spontaneous hydrolysis to form 2-oxo-Delta(3)-4,5,5-trimethylcyclopentenylacetate. Is also able to convert (-)-camphor to the corresponding lactone in vitro. Shows no conversion of (+)-camphor, (+)-fenchone, (-)-fenchone, and (+)-nopinone. Acts on other bicyclic ketones but very poorly on a few 2- and 4-substituted monocyclic ketones. This Pseudomonas putida (Arthrobacter siderocapsulatus) protein is 3,6-diketocamphane 1,6-monooxygenase.